The primary structure comprises 29 residues: uncharacterized protein (29 aa).

Residues F7–A27 form a helical membrane-spanning segment.

The protein localises to the cell inner membrane. This is an uncharacterized protein from Escherichia coli O6:K15:H31 (strain 536 / UPEC).